Here is a 181-residue protein sequence, read N- to C-terminus: Large ribosomal subunit protein uL5 (181 aa).

The protein belongs to the universal ribosomal protein uL5 family. Part of the 50S ribosomal subunit; part of the 5S rRNA/L5/L18/L25 subcomplex. Contacts the 5S rRNA and the P site tRNA. Forms a bridge to the 30S subunit in the 70S ribosome.

In terms of biological role, this is one of the proteins that bind and probably mediate the attachment of the 5S RNA into the large ribosomal subunit, where it forms part of the central protuberance. In the 70S ribosome it contacts protein S13 of the 30S subunit (bridge B1b), connecting the 2 subunits; this bridge is implicated in subunit movement. Contacts the P site tRNA; the 5S rRNA and some of its associated proteins might help stabilize positioning of ribosome-bound tRNAs. The chain is Large ribosomal subunit protein uL5 from Sulfurovum sp. (strain NBC37-1).